Reading from the N-terminus, the 200-residue chain is Recombination protein RecR (200 aa).

The segment at 59–74 adopts a C4-type zinc-finger fold; the sequence is CGTCGSLDVTDPCAVC. Positions 82–177 constitute a Toprim domain; that stretch reads RLLCVVEEVG…PVTMLARGVP (96 aa).

The protein belongs to the RecR family.

May play a role in DNA repair. It seems to be involved in an RecBC-independent recombinational process of DNA repair. It may act with RecF and RecO. In Caulobacter vibrioides (strain ATCC 19089 / CIP 103742 / CB 15) (Caulobacter crescentus), this protein is Recombination protein RecR.